Here is a 160-residue protein sequence, read N- to C-terminus: Transcriptional repressor NrdR (160 aa).

A zinc finger lies at 3–34 (CPFCRHADTQVVDSRVSEDGATIRRRRRCPAC). The 91-residue stretch at 49–139 (PSVVKKDGSR…VYRRFEDVSE (91 aa)) folds into the ATP-cone domain.

It belongs to the NrdR family. Zn(2+) serves as cofactor.

Negatively regulates transcription of bacterial ribonucleotide reductase nrd genes and operons by binding to NrdR-boxes. This chain is Transcriptional repressor NrdR, found in Paraburkholderia phytofirmans (strain DSM 17436 / LMG 22146 / PsJN) (Burkholderia phytofirmans).